The chain runs to 238 residues: Ribonuclease PH (238 aa).

Residues arginine 86 and 124 to 126 each bind phosphate; that span reads GTR.

Belongs to the RNase PH family. Homohexameric ring arranged as a trimer of dimers.

It catalyses the reaction tRNA(n+1) + phosphate = tRNA(n) + a ribonucleoside 5'-diphosphate. In terms of biological role, phosphorolytic 3'-5' exoribonuclease that plays an important role in tRNA 3'-end maturation. Removes nucleotide residues following the 3'-CCA terminus of tRNAs; can also add nucleotides to the ends of RNA molecules by using nucleoside diphosphates as substrates, but this may not be physiologically important. Probably plays a role in initiation of 16S rRNA degradation (leading to ribosome degradation) during starvation. The polypeptide is Ribonuclease PH (Salmonella choleraesuis (strain SC-B67)).